Reading from the N-terminus, the 718-residue chain is MTLEVVSDAAGRMRVKVDWVRCDSRRAVAVEEAVAKQNGVRVVHAYPRTGSVVVWYSPRRADRAAVLAAIKGAAHVAAELIPARAPHSAEIRNTDVLRMVIGGVALALLGVRRYVFARPPLLGTTGRTVATGVTIFTGYPFLRGALRSLRSGKAGTDALVSAATVASLILRENVVALTVLWLLNIGEYLQDLTLRRTRRAISELLRGNQDTAWVRLTDPSAGSDAATEIQVPIDTVQIGDEVVVHEHVAIPVDGEVVDGEAIVNQSAITGENLPVSVVVGTRVHAGSVVVRGRVVVRAHAVGNQTTIGRIISRVEEAQLDRAPIQTVGENFSRRFVPTSFIVSAIALLITGDVRRAMTMLLIACPCAVGLSTPTAISAAIGNGARRGILIKGGSHLEQAGRVDAIVFDKTGTLTVGRPVVTNIVAMHKDWEPEQVLAYAASSEIHSRHPLAEAVIRSTEERRISIPPHEECEVLVGLGMRTWADGRTLLLGSPSLLRAEKVRVSKKASEWVDKLRRQAETPLLLAVDGTLVGLISLRDEVRPEAAQVLTKLRANGIRRIVMLTGDHPEIAQVVADELGIDEWRAEVMPEDKLAAVRELQDDGYVVGMVGDGINDAPALAAADIGIAMGLAGTDVAVETADVALANDDLHRLLDVGDLGERAVDVIRQNYGMSIAVNAAGLLIGAGGALSPVLAAILHNASSVAVVANSSRLIRYRLDR.

An HMA domain is found at 11 to 78; the sequence is GRMRVKVDWV…AIKGAAHVAA (68 aa). 6 consecutive transmembrane segments (helical) span residues 87 to 105, 128 to 146, 154 to 168, 177 to 191, 327 to 351, and 357 to 375; these read HSAEIRNTDVLRMVIGGVA, TVATGVTIFTGYPFLRGAL, AGTDALVSAATVASL, LTVLWLLNIGEYLQD, VGENFSRRFVPTSFIVSAIALLITG, and MTMLLIACPCAVGLSTPTA. D408 functions as the 4-aspartylphosphate intermediate in the catalytic mechanism. Mg(2+)-binding residues include D408, T410, and D610. The next 2 helical transmembrane spans lie at 661–680 and 690–709; these read AVDVIRQNYGMSIAVNAAGL and PVLAAILHNASSVAVVANSS.

It belongs to the cation transport ATPase (P-type) (TC 3.A.3) family. Type IB subfamily.

The protein resides in the cell membrane. The enzyme catalyses Mn(2+)(in) + ATP + H2O = Mn(2+)(out) + ADP + phosphate + H(+). Its function is as follows. High affinity, slow turnover Mn(2+) transporting ATPase. In Mycobacterium bovis (strain ATCC BAA-935 / AF2122/97), this protein is Manganese-exporting P-type ATPase (ctpC).